A 390-amino-acid chain; its full sequence is MTIRKMTELNITEKRILIRSDLNVPIENGIIQSDARILAALPTIELALQKKAKVIIMSHLGRPKEGYYTKKYSLFPIFEYFKKKFNNTKIYFSNNFLDGIKLNPGEIALLENTRFNKGELNNDEQLSKKYSDLCDIFVMDAFGSAHRMQSSTYGIGKFVKIACAGLLLISEIDALKKALKKPKRPMVAIVGGSKVSTKFNVLNKLSKIADTIIVGGGIANTFLAIDYKIGKSLYEPDFVFEAKKLRDKYNIIVPIDSRVGKNFCKNEQAIIKSPDNIKEDEEIMDFGDESIKKIISIITQSQTIMWNGPVGVFEFPNFRKGTEMIAKTIANSNAFSIAGGGDTLSVIDMFNIKNNISYISTGGGAFLEFIEGKKLPAIQMLEENFKNKSK.

Substrate-binding positions include 21–23 (DLN), Arg-36, 59–62 (HLGR), Arg-114, and Arg-147. Residues Lys-198, Glu-314, and 340–343 (GGDT) each bind ATP.

This sequence belongs to the phosphoglycerate kinase family. Monomer.

It is found in the cytoplasm. The catalysed reaction is (2R)-3-phosphoglycerate + ATP = (2R)-3-phospho-glyceroyl phosphate + ADP. It functions in the pathway carbohydrate degradation; glycolysis; pyruvate from D-glyceraldehyde 3-phosphate: step 2/5. This chain is Phosphoglycerate kinase (pgk), found in Buchnera aphidicola subsp. Acyrthosiphon pisum (strain APS) (Acyrthosiphon pisum symbiotic bacterium).